We begin with the raw amino-acid sequence, 231 residues long: PX domain-containing protein 1 (231 aa).

The PX domain occupies 1-134 (MASAVFEGTS…TFFERSPLDQ (134 aa)).

In Homo sapiens (Human), this protein is PX domain-containing protein 1 (PXDC1).